Here is a 657-residue protein sequence, read N- to C-terminus: Zinc finger CCCH domain-containing protein 50 (657 aa).

ANK repeat units lie at residues Glu68 to Val97 and Asp104 to Thr136. Low complexity predominate over residues Ser176–Pro206. Positions Ser176–Leu222 are disordered. 2 C3H1-type zinc fingers span residues Pro274–Phe302 and Tyr311–Glu333. The tract at residues Tyr507 to Gly566 is disordered. Residues Gln549–Trp562 show a composition bias toward polar residues.

The polypeptide is Zinc finger CCCH domain-containing protein 50 (Oryza sativa subsp. japonica (Rice)).